Here is a 515-residue protein sequence, read N- to C-terminus: Calcium-dependent protein kinase 2 (515 aa).

The segment at 1 to 51 (MGNCCPGSGDAEPASSDASTGNGSSSFKAGASPSSAPAQNKPPAPIGPVLG) is disordered. Glycine 2 carries the N-myristoyl glycine lipid modification. The segment covering 14–38 (ASSDASTGNGSSSFKAGASPSSAPA) has biased composition (low complexity). The Protein kinase domain maps to 61-319 (YTIGKELGRG…AYEVLNHPWI (259 aa)). ATP is bound by residues 67–75 (LGRGQFGVT) and lysine 90. Catalysis depends on aspartate 185, which acts as the Proton acceptor. The tract at residues 325–355 (APDTPLDNAVMNRLKQFRAMNQFKKAALRVI) is autoinhibitory domain. EF-hand domains are found at residues 362–397 (EEIR…QGTK), 398–433 (LTEA…MNRM), 434–469 (DREE…KGLL), and 473–504 (DIKD…GNPE). Ca(2+) contacts are provided by aspartate 375, aspartate 377, serine 379, threonine 381, glutamate 386, aspartate 411, aspartate 413, asparagine 415, threonine 417, glutamate 422, aspartate 447, aspartate 449, serine 451, cysteine 453, glutamate 458, aspartate 482, aspartate 484, aspartate 486, arginine 488, and glutamate 493.

This sequence belongs to the protein kinase superfamily. Ser/Thr protein kinase family. CDPK subfamily. In terms of tissue distribution, expressed in heading panicles, spikelets and mature pollen grains.

It is found in the membrane. It carries out the reaction L-seryl-[protein] + ATP = O-phospho-L-seryl-[protein] + ADP + H(+). The enzyme catalyses L-threonyl-[protein] + ATP = O-phospho-L-threonyl-[protein] + ADP + H(+). Activated by calcium. Autophosphorylation may play an important role in the regulation of the kinase activity. Its function is as follows. May play a role in signal transduction pathways that involve calcium as a second messenger. The protein is Calcium-dependent protein kinase 2 of Oryza sativa subsp. japonica (Rice).